Here is a 63-residue protein sequence, read N- to C-terminus: Beta-insect depressant toxin Im-3 (63 aa).

An LCN-type CS-alpha/beta domain is found at 1–63 (KEGYGVGKDG…KVWESSTNTC (63 aa)). Intrachain disulfides connect Cys-11–Cys-63, Cys-15–Cys-37, Cys-22–Cys-44, and Cys-26–Cys-46.

It belongs to the long (4 C-C) scorpion toxin superfamily. Sodium channel inhibitor family. Beta subfamily. As to expression, expressed by the venom gland.

It is found in the secreted. Functionally, beta toxins bind voltage-independently at site-4 of sodium channels (Nav) and shift the voltage of activation toward more negative potentials thereby affecting sodium channel activation and promoting spontaneous and repetitive firing. Induces paralysis in cricket A.domestica but does not induce death. This is Beta-insect depressant toxin Im-3 from Isometrus maculatus (Lesser brown scorpion).